Reading from the N-terminus, the 89-residue chain is uncharacterized protein (89 aa).

A run of 3 helical transmembrane segments spans residues 5-25 (AYLV…KRKA), 36-56 (RLWL…MQTF), and 67-87 (YGVP…YSPF).

The protein localises to the cell membrane. This is an uncharacterized protein from Bacillus subtilis (strain 168).